Here is a 165-residue protein sequence, read N- to C-terminus: Disulfide bond formation protein B (165 aa).

Residues 1–11 (MICSKVPVRAW) lie on the Cytoplasmic side of the membrane. Residues 12 to 28 (FATLGLGCLGLVAVGMA) form a helical membrane-spanning segment. Residues 29 to 46 (LQTLLHLAPCPLCIFQRL) are Periplasmic-facing. A disulfide bridge links cysteine 38 with cysteine 41. The chain crosses the membrane as a helical span at residues 47–61 (LYIMIGFVGLLGFVL). Residues 62 to 66 (PAGRL) are Cytoplasmic-facing. The chain crosses the membrane as a helical span at residues 67–84 (LWSTLAAGLGVLGFGVAA). Residues 85 to 142 (YQTWMQAFPDLAPECGFTDPNAIERLVDWLGMEWPSMFLATGFCTSRDWELLGLSMAN) are Periplasmic-facing. An intrachain disulfide couples cysteine 99 to cysteine 128. Residues 143 to 161 (WSVLIFAGIVAYAVLLFVR) form a helical membrane-spanning segment. The Cytoplasmic portion of the chain corresponds to 162 to 165 (KDRA).

The protein belongs to the DsbB family.

It is found in the cell inner membrane. In terms of biological role, required for disulfide bond formation in some periplasmic proteins. Acts by oxidizing the DsbA protein. The polypeptide is Disulfide bond formation protein B (Dechloromonas aromatica (strain RCB)).